Reading from the N-terminus, the 466-residue chain is 20-hydroxyecdysone protein (466 aa).

A signal peptide spans 1–16 (MKPVALILVFLAISQA). A 1; approximate repeat occupies 48 to 50 (EVK). Residues 48 to 157 (EVKAEEVKPE…EIKKEATEIK (110 aa)) form a 16 X repeats region. The stretch at 53-55 (EVK) is one 2; approximate repeat. Residues 55 to 94 (KPEEVKPIAQEEKAKDLKEEVKPEIKPEIKEQPKPDIKDE) form a disordered region. The 3; approximate repeat unit spans residues 58–60 (EVK). The stretch at 70-72 (DLK) is one 4; approximate repeat. The 5; approximate repeat unit spans residues 74–76 (EVK). The stretch at 78-80 (EIK) is one 6; approximate repeat. The 7; approximate repeat unit spans residues 82-84 (EIK). Residues 90-92 (DIK) form an 8; approximate repeat. The 9; approximate repeat unit spans residues 94 to 96 (EIK). Residues 98-100 (DLK) form a 10; approximate repeat. Residues 102–104 (DIK) form an 11; approximate repeat. Residues 106 to 108 (ELK) form a 12; approximate repeat. Residues 119–220 (PNAKPLELKE…QQSTTQGNFV (102 aa)) are disordered. The span at 124–160 (LELKEKSLEAEEKPQEIKEEVQQPEIKKEATEIKEEP) shows a compositional bias: basic and acidic residues. The stretch at 125–127 (ELK) is one 13; approximate repeat. Residues 139–141 (EIK) form a 14; approximate repeat. The stretch at 148–150 (EIK) is one 15; approximate repeat. A 16; approximate repeat occupies 155-157 (EIK). Residues 170-180 (AEETVVVPAEE) are compositionally biased toward low complexity. Polar residues predominate over residues 185–194 (PVEQEQSENQ). Low complexity predominate over residues 203-216 (QATQATPTQQSTTQ). N-linked (GlcNAc...) asparagine glycans are attached at residues Asn-294 and Asn-352. Residues 378–435 (RPQNAPAAAPATQATEKPAVDDKIDPANDEVGEFVPESDNELRASGENIDDSFEDAGV) form a disordered region. Residues 379–394 (PQNAPAAAPATQATEK) are compositionally biased toward low complexity. Residues 404–416 (ANDEVGEFVPESD) show a composition bias toward acidic residues.

The protein resides in the secreted. In terms of biological role, probably has an essential role in embryogenesis, induces morphogenesis of imaginal disks, and may participate in multimolecular aggregates. In Drosophila melanogaster (Fruit fly), this protein is 20-hydroxyecdysone protein (ImpE2).